Consider the following 206-residue polypeptide: MASGKFITFEGIDGAGKTTHLQWFCERLQGKLAAAGRQVVVTREPGGTQLGEKLREILLNQPMDLETEALLMFAARREHLALVIEPALARGDWVVSDRFTDATFAYQGGGRGLPRDKLETLERWVQGGFQPDLTVLFDVAPQVASERRGAARMPDKFESESDAFFSRTRSEYLRRAEEAPHRFAIVDATQTIPEIRHQLERVLAAL.

11 to 18 serves as a coordination point for ATP; the sequence is GIDGAGKT.

The protein belongs to the thymidylate kinase family.

The enzyme catalyses dTMP + ATP = dTDP + ADP. Its function is as follows. Phosphorylation of dTMP to form dTDP in both de novo and salvage pathways of dTTP synthesis. The protein is Thymidylate kinase of Burkholderia lata (strain ATCC 17760 / DSM 23089 / LMG 22485 / NCIMB 9086 / R18194 / 383).